The sequence spans 186 residues: Probable GTP-binding protein EngB (186 aa).

Residues aspartate 18–lysine 186 form the EngB-type G domain. GTP contacts are provided by residues glycine 26–serine 33, glycine 52–leucine 56, aspartate 70–glycine 73, threonine 137–aspartate 140, and valine 166–serine 168. Positions 33 and 54 each coordinate Mg(2+).

The protein belongs to the TRAFAC class TrmE-Era-EngA-EngB-Septin-like GTPase superfamily. EngB GTPase family. Requires Mg(2+) as cofactor.

Necessary for normal cell division and for the maintenance of normal septation. This Mycoplasmopsis pulmonis (strain UAB CTIP) (Mycoplasma pulmonis) protein is Probable GTP-binding protein EngB.